The chain runs to 179 residues: ADP-ribosylation factor-like protein 5A (179 aa).

The N-myristoyl glycine moiety is linked to residue Gly2. Residues 23 to 30, 66 to 70, 125 to 128, and Ala159 contribute to the GTP site; these read GLDNAGKT, DIGGQ, and NKQD.

It belongs to the small GTPase superfamily. Arf family.

Its function is as follows. Lacks ADP-ribosylation enhancing activity. The sequence is that of ADP-ribosylation factor-like protein 5A (ARL5A) from Homo sapiens (Human).